Consider the following 593-residue polypeptide: MEDYKQRIKNKLNVVPMEPGCYLMKDRNDQVIYVGKAKKLRNRLRSYFTGAHDAKTTRLVGEIRRFEFIVTSSETESLLLELNLIKQYQPRYNILLKDDKSYPFIKITKEKYPRLLVTRTVKQGTGKYFGPYPNAYSAQETKKLLDRIYPYRKCDKMPDKLCLYYHIGQCLGPCVYDVDLSKYAQMTKEITDFLNGEDKTILKSLEERMLTASESLDFERAKEYRDLIQHIQNLTNKQKIMSSDKTIRDVFGYSVDKGWMCIQVFFIRQGNMIKRDTTMIPLQQTEEEEFYTFIGQFYSLNQHILPKEVHVPRNLDKEMIQSVVDTKIVQPARGPKKDMVDLAAHNAKVSLNNKFELISRDESRTIKAIEELGTQMGIQTPIRIEAFDNSNIQGVDPVSAMVTFVDGKPDKKNYRKYKIKTVKGPDDYKSMREVVRRRYSRVLNEGLPLPDLIIVDGGKGHMNGVIDVLQNELGLDIPVAGLQKNDKHQTSELLYGASAEIVPLKKNSQAFYLLHRIQDEVHRFAITFHRQTRQKTGLKSILDDIDGIGNKRKTLLLRSFGSIKKMKEATLEDFKNIGIPENVAKNLHEQLHK.

Residues 17–94 (MEPGCYLMKD…IKQYQPRYNI (78 aa)) enclose the GIY-YIG domain. The region spanning 199–234 (KTILKSLEERMLTASESLDFERAKEYRDLIQHIQNL) is the UVR domain.

The protein belongs to the UvrC family. As to quaternary structure, interacts with UvrB in an incision complex.

It is found in the cytoplasm. The UvrABC repair system catalyzes the recognition and processing of DNA lesions. UvrC both incises the 5' and 3' sides of the lesion. The N-terminal half is responsible for the 3' incision and the C-terminal half is responsible for the 5' incision. This is UvrABC system protein C from Staphylococcus aureus (strain USA300).